We begin with the raw amino-acid sequence, 1176 residues long: 3-hydroxy-3-methylglutaryl-coenzyme A reductase (1176 aa).

Over 1 to 34 (MSLPNHSGSSAFKSFSYIVGTGIKRAAKLSTRNP) the chain is Cytoplasmic. Residues 35–55 (IEMIVVVLILSSFSYFYLFNL) form a helical membrane-spanning segment. Topologically, residues 56–299 (ARTSDIFSGT…VKELIDLADN (244 aa)) are lumenal. N-linked (GlcNAc...) asparagine glycans are attached at residues Asn-224 and Asn-238. Residues 300–320 (IDIIVILVGYIMMIATFISLY) traverse the membrane as a helical segment. In terms of domain architecture, SSD spans 301-465 (DIIVILVGYI…FTWYTAVLAL (165 aa)). At 321–330 (VNMRAMGSRY) the chain is on the cytoplasmic side. The helical transmembrane segment at 331-351 (TLATAVVFNGFFSFMLALLTV) threads the bilayer. Residues 352–355 (RALG) lie on the Lumenal side of the membrane. The helical transmembrane segment at 356-376 (VDVYPVVLAEAIPFLAVTIGF) threads the bilayer. The Cytoplasmic portion of the chain corresponds to 377–422 (ERPFKLTKRVFQFSKETPLTKQEIRTTIMRAVDTVALPIARDCFME). Residues 423-443 (IIVLVLGAKSGISGLEEFCLL) traverse the membrane as a helical segment. A topological domain (lumenal) is located at residue Ser-444. Residues 445–465 (AILLAYDFIIMFTWYTAVLAL) form a helical membrane-spanning segment. Residues 466 to 524 (KLELLRIREINGISADDIKKGTKKSTGYIRRTVIKAFSDDHAAGANTANQKADGPIIGR) are Cytoplasmic-facing. The helical transmembrane segment at 525 to 545 (VKLLMIVGFVVMHIFKFCSAF) threads the bilayer. The Lumenal segment spans residues 546–622 (QSVGPQVNIT…DTYAVYIQHP (77 aa)). Asn-553 and Asn-596 each carry an N-linked (GlcNAc...) asparagine glycan. Residues 623-643 (VISKWLTIALFVSLFLNTYLF) form a helical membrane-spanning segment. Topologically, residues 644–1176 (NVAKQPKQIV…GTEPGTCIKS (533 aa)) are cytoplasmic. Residues 699-724 (PNHKRSHNHHHSHSHSHNHHSNHHQS) form a disordered region. Over residues 700–721 (NHKRSHNHHHSHSHSHNHHSNH) the composition is skewed to basic residues. The Charge relay system role is filled by Glu-841. 847-853 (STARGCK) is a CoA binding site. NADP(+)-binding positions include 907-909 (SRF) and 934-942 (DAMGMNMIS). Lys-972 serves as the catalytic Charge relay system. Residue 1001 to 1003 (VLK) participates in CoA binding. Asp-1048 serves as the catalytic Charge relay system. Residue 1145-1146 (AH) coordinates CoA. Residue His-1146 is the Proton donor of the active site. 1150-1151 (NR) is an NADP(+) binding site. The segment at 1153-1176 (TQAPTITSGPAPSTGTEPGTCIKS) is disordered.

Belongs to the HMG-CoA reductase family.

Its subcellular location is the endoplasmic reticulum membrane. It catalyses the reaction (R)-mevalonate + 2 NADP(+) + CoA = (3S)-3-hydroxy-3-methylglutaryl-CoA + 2 NADPH + 2 H(+). Its pathway is metabolic intermediate biosynthesis; (R)-mevalonate biosynthesis; (R)-mevalonate from acetyl-CoA: step 3/3. In terms of biological role, HMG-CoA reductase; part of the first module of ergosterol biosynthesis pathway that includes the early steps of the pathway, conserved across all eukaryotes, and which results in the formation of mevalonate from acetyl-coenzyme A (acetyl-CoA). In this module, the cytosolic acetyl-CoA acetyltransferase catalyzes the formation of acetoacetyl-CoA. The hydroxymethylglutaryl-CoA synthase then condenses acetyl-CoA with acetoacetyl-CoA to form HMG-CoA. The rate-limiting step of the early module is the reduction to mevalonate by the 3-hydroxy-3-methylglutaryl-coenzyme A (HMG-CoA) reductase hmgA. The polypeptide is 3-hydroxy-3-methylglutaryl-coenzyme A reductase (Phycomyces blakesleeanus (strain ATCC 8743b / DSM 1359 / FGSC 10004 / NBRC 33097 / NRRL 1555)).